A 214-amino-acid polypeptide reads, in one-letter code: Methyltransferase HEMK2 (214 aa).

S-adenosyl-L-methionine-binding residues include T29, E51, G53, D77, D103, L104, and N122. N122 contacts a protein.

This sequence belongs to the eukaryotic/archaeal PrmC-related family. As to quaternary structure, heterodimer; heterodimerization with TRMT112 is required for S-adenosyl-L-methionine-binding. Ubiquitinated, leading to its degradation by the proteasome. Highly expressed in undifferentiated embryonic stem cells (at protein level). Also expressed in testis and brain, weakly expressed in differentiated embryonic stem cells and kidney. Not expressed in muscle, heart, placenta, pancreas, lung and stomach.

It localises to the nucleus. It carries out the reaction L-lysyl-[histone] + S-adenosyl-L-methionine = N(6)-methyl-L-lysyl-[histone] + S-adenosyl-L-homocysteine + H(+). The catalysed reaction is L-glutaminyl-[protein] + S-adenosyl-L-methionine = N(5)-methyl-L-glutaminyl-[protein] + S-adenosyl-L-homocysteine + H(+). It catalyses the reaction methylarsonous acid + S-adenosyl-L-methionine = dimethylarsinate + S-adenosyl-L-homocysteine + 2 H(+). Its function is as follows. Methyltransferase that can methylate proteins and, to a lower extent, arsenic. Catalytic subunit of a heterodimer with TRMT112, which monomethylates 'Lys-12' of histone H4 (H4K12me1), a modification present at the promoters of numerous genes encoding cell cycle regulators. Catalytic subunit of a heterodimer with TRMT112, which catalyzes N5-methylation of Glu residue of proteins with a Gly-Gln-Xaa-Xaa-Xaa-Arg motif. Methylates ETF1 on 'Gln-185'; ETF1 needs to be complexed to ERF3 in its GTP-bound form to be efficiently methylated. May also play a role in the modulation of arsenic-induced toxicity by mediating the conversion of monomethylarsonous acid (3+) into the less toxic dimethylarsonic acid. It however only plays a limited role in arsenic metabolism compared with AS3MT. The polypeptide is Methyltransferase HEMK2 (Mus musculus (Mouse)).